Here is a 248-residue protein sequence, read N- to C-terminus: ATP synthase subunit a, chloroplastic (248 aa).

Transmembrane regions (helical) follow at residues 37 to 57 (AQVL…AILA), 96 to 116 (VPFI…GALL), 134 to 154 (DINT…YAGL), 200 to 220 (LVVA…MMFL), and 221 to 241 (GLFT…AYIG).

Belongs to the ATPase A chain family. As to quaternary structure, F-type ATPases have 2 components, CF(1) - the catalytic core - and CF(0) - the membrane proton channel. CF(1) has five subunits: alpha(3), beta(3), gamma(1), delta(1), epsilon(1). CF(0) has four main subunits: a, b, b' and c.

The protein resides in the plastid. Its subcellular location is the chloroplast thylakoid membrane. Functionally, key component of the proton channel; it plays a direct role in the translocation of protons across the membrane. The chain is ATP synthase subunit a, chloroplastic from Anthoceros angustus (Hornwort).